A 215-amino-acid chain; its full sequence is N-(5'-phosphoribosyl)anthranilate isomerase (215 aa).

It belongs to the TrpF family.

It carries out the reaction N-(5-phospho-beta-D-ribosyl)anthranilate = 1-(2-carboxyphenylamino)-1-deoxy-D-ribulose 5-phosphate. Its pathway is amino-acid biosynthesis; L-tryptophan biosynthesis; L-tryptophan from chorismate: step 3/5. The protein is N-(5'-phosphoribosyl)anthranilate isomerase of Paracoccus denitrificans (strain Pd 1222).